Consider the following 185-residue polypeptide: ATP-dependent protease subunit HslV (185 aa).

Thr-14 is a catalytic residue. Residues Ala-168, Cys-171, and Thr-174 each contribute to the Na(+) site.

It belongs to the peptidase T1B family. HslV subfamily. A double ring-shaped homohexamer of HslV is capped on each side by a ring-shaped HslU homohexamer. The assembly of the HslU/HslV complex is dependent on binding of ATP.

It localises to the cytoplasm. The catalysed reaction is ATP-dependent cleavage of peptide bonds with broad specificity.. Its activity is regulated as follows. Allosterically activated by HslU binding. Its function is as follows. Protease subunit of a proteasome-like degradation complex believed to be a general protein degrading machinery. This Hyphomonas neptunium (strain ATCC 15444) protein is ATP-dependent protease subunit HslV.